Here is a 282-residue protein sequence, read N- to C-terminus: UDP-3-O-acyl-N-acetylglucosamine deacetylase (282 aa).

His-80, His-240, and Asp-244 together coordinate Zn(2+). His-267 functions as the Proton donor in the catalytic mechanism.

It belongs to the LpxC family. Zn(2+) serves as cofactor.

It localises to the plastid. The protein localises to the chloroplast. The enzyme catalyses a UDP-3-O-[(3R)-3-hydroxyacyl]-N-acetyl-alpha-D-glucosamine + H2O = a UDP-3-O-[(3R)-3-hydroxyacyl]-alpha-D-glucosamine + acetate. Its pathway is glycolipid biosynthesis; lipid IV(A) biosynthesis; lipid IV(A) from (3R)-3-hydroxytetradecanoyl-[acyl-carrier-protein] and UDP-N-acetyl-alpha-D-glucosamine: step 2/6. Catalyzes the hydrolysis of UDP-3-O-myristoyl-N-acetylglucosamine to form UDP-3-O-myristoylglucosamine and acetate. Involved in the biosynthesis of lipid A, a phosphorylated glycolipid that in bacteria anchors the lipopolysaccharide to the outer membrane of the cell. The target for the lipopolysaccharides produced in the chloroplast could either be the cell envelope of the eukaryote or the plastid membrane. The chain is UDP-3-O-acyl-N-acetylglucosamine deacetylase from Cyanidium caldarium (Red alga).